We begin with the raw amino-acid sequence, 469 residues long: 3-isopropylmalate dehydratase large subunit (469 aa).

The [4Fe-4S] cluster site is built by Cys-349, Cys-409, and Cys-412.

It belongs to the aconitase/IPM isomerase family. LeuC type 1 subfamily. Heterodimer of LeuC and LeuD. [4Fe-4S] cluster is required as a cofactor.

The enzyme catalyses (2R,3S)-3-isopropylmalate = (2S)-2-isopropylmalate. The protein operates within amino-acid biosynthesis; L-leucine biosynthesis; L-leucine from 3-methyl-2-oxobutanoate: step 2/4. In terms of biological role, catalyzes the isomerization between 2-isopropylmalate and 3-isopropylmalate, via the formation of 2-isopropylmaleate. This Methylorubrum extorquens (strain CM4 / NCIMB 13688) (Methylobacterium extorquens) protein is 3-isopropylmalate dehydratase large subunit.